We begin with the raw amino-acid sequence, 328 residues long: Bifunctional phosphopantetheine adenylyltransferase/NTP phosphatase (328 aa).

Positions 1 to 152 (MITVVGGTFS…GNGRRLKPVK (152 aa)) are phosphopantetheine adenylyltransferase. Positions 153-328 (VAIATNNSAK…DFYDTTYTPP (176 aa)) are inosine/xanthosine triphosphatase.

The protein in the N-terminal section; belongs to the eukaryotic CoaD family. It in the C-terminal section; belongs to the YjjX NTPase family. Requires Mg(2+) as cofactor. Mn(2+) is required as a cofactor.

Its subcellular location is the cytoplasm. The catalysed reaction is (R)-4'-phosphopantetheine + ATP + H(+) = 3'-dephospho-CoA + diphosphate. The enzyme catalyses XTP + H2O = XDP + phosphate + H(+). It carries out the reaction ITP + H2O = IDP + phosphate + H(+). It functions in the pathway cofactor biosynthesis; coenzyme A biosynthesis. Reversibly transfers an adenylyl group from ATP to 4'-phosphopantetheine, yielding dephospho-CoA (dPCoA) and pyrophosphate. In terms of biological role, phosphatase that hydrolyzes non-canonical purine nucleotides such as XTP and ITP to their respective diphosphate derivatives. Probably excludes non-canonical purines from DNA/RNA precursor pool, thus preventing their incorporation into DNA/RNA and avoiding chromosomal lesions. The polypeptide is Bifunctional phosphopantetheine adenylyltransferase/NTP phosphatase (coaD) (Thermoplasma volcanium (strain ATCC 51530 / DSM 4299 / JCM 9571 / NBRC 15438 / GSS1)).